Here is a 530-residue protein sequence, read N- to C-terminus: ATP-dependent 6-phosphofructokinase 4, chloroplastic (530 aa).

A chloroplast-targeting transit peptide spans 1–54; the sequence is MEASISFLGSTKPNISLFNPSSNVLPRRDFPLPALKLKKVSVLPRILHQKRLIR. A Phosphoserine modification is found at Ser121. Residues Gly152, 215–216, and 240–243 contribute to the ATP site; these read RG and GGGT. Substrate is bound by residues 269-271, 314-316, Glu370, and 427-430; these read TID, MGR, and YMIR. Asp271 functions as the Proton acceptor in the catalytic mechanism.

This sequence belongs to the phosphofructokinase type A (PFKA) family. PPi-dependent PFK group II subfamily. Atypical ATP-dependent clade 'X' sub-subfamily. In terms of assembly, homotetramer. The cofactor is Mg(2+). Expressed in leaves, stems and flowers.

It is found in the plastid. It localises to the chloroplast. The catalysed reaction is beta-D-fructose 6-phosphate + ATP = beta-D-fructose 1,6-bisphosphate + ADP + H(+). It functions in the pathway carbohydrate degradation; glycolysis; D-glyceraldehyde 3-phosphate and glycerone phosphate from D-glucose: step 3/4. With respect to regulation, allosterically activated by AMP. Functionally, catalyzes the phosphorylation of D-fructose 6-phosphate to fructose 1,6-bisphosphate by ATP, the first committing step of glycolysis. This Arabidopsis thaliana (Mouse-ear cress) protein is ATP-dependent 6-phosphofructokinase 4, chloroplastic.